Consider the following 133-residue polypeptide: MDECVVDAAAVVDALAGKGASAIVLRGLLKESISNAPHLLDAEVGHALRRAVLSDEISEEQARAALDALPYLIDNRYPHSPRLIEYTWQLRHNVTFYDALYVALATALDVPLLTGDSRLAAAPGLPCEIKLVR.

The Mg(2+) site is built by Asp-7 and Asp-98.

This sequence belongs to the PINc/VapC protein family. The cofactor is Mg(2+).

Functionally, toxic component of a type II toxin-antitoxin (TA) system. The cognate antitoxin is VapB1. The sequence is that of Ribonuclease VapC1 from Mycobacterium tuberculosis (strain CDC 1551 / Oshkosh).